Consider the following 187-residue polypeptide: ATP synthase subunit b (187 aa).

The chain crosses the membrane as a helical span at residues 32-52 (NILDTNLINLAIIITVLFVFG).

The protein belongs to the ATPase B chain family. In terms of assembly, F-type ATPases have 2 components, F(1) - the catalytic core - and F(0) - the membrane proton channel. F(1) has five subunits: alpha(3), beta(3), gamma(1), delta(1), epsilon(1). F(0) has four main subunits: a(1), b(1), b'(1) and c(10-14). The alpha and beta chains form an alternating ring which encloses part of the gamma chain. F(1) is attached to F(0) by a central stalk formed by the gamma and epsilon chains, while a peripheral stalk is formed by the delta, b and b' chains.

The protein resides in the cellular thylakoid membrane. F(1)F(0) ATP synthase produces ATP from ADP in the presence of a proton or sodium gradient. F-type ATPases consist of two structural domains, F(1) containing the extramembraneous catalytic core and F(0) containing the membrane proton channel, linked together by a central stalk and a peripheral stalk. During catalysis, ATP synthesis in the catalytic domain of F(1) is coupled via a rotary mechanism of the central stalk subunits to proton translocation. Functionally, component of the F(0) channel, it forms part of the peripheral stalk, linking F(1) to F(0). This chain is ATP synthase subunit b, found in Trichormus variabilis (strain ATCC 29413 / PCC 7937) (Anabaena variabilis).